The chain runs to 304 residues: D-alanine--D-alanine ligase (304 aa).

The ATP-grasp domain maps to 99–293; it reads KKILRYEGIE…YSKLLDMIIE (195 aa). 126–181 provides a ligand contact to ATP; sequence LDKLGFPLVVKPNSGGSSVGVKIVYDKDELISMLETVFEWDSEVVIEKYIKGEEIT. The Mg(2+) site is built by Asp-248, Glu-260, and Asn-262.

The protein belongs to the D-alanine--D-alanine ligase family. Mg(2+) serves as cofactor. Mn(2+) is required as a cofactor.

The protein localises to the cytoplasm. The enzyme catalyses 2 D-alanine + ATP = D-alanyl-D-alanine + ADP + phosphate + H(+). Its pathway is cell wall biogenesis; peptidoglycan biosynthesis. Functionally, cell wall formation. This chain is D-alanine--D-alanine ligase, found in Bacillus anthracis (strain A0248).